Consider the following 108-residue polypeptide: Integration host factor subunit alpha (108 aa).

This sequence belongs to the bacterial histone-like protein family. As to quaternary structure, heterodimer of an alpha and a beta chain.

Its function is as follows. This protein is one of the two subunits of integration host factor, a specific DNA-binding protein that functions in genetic recombination as well as in transcriptional and translational control. The chain is Integration host factor subunit alpha from Methylorubrum extorquens (strain CM4 / NCIMB 13688) (Methylobacterium extorquens).